The sequence spans 273 residues: Large ribosomal subunit protein uL2cz/uL2cy (273 aa).

2 disordered regions span residues 1–24 (MAIH…QAKS) and 224–254 (NPVD…PALG).

This sequence belongs to the universal ribosomal protein uL2 family. In terms of assembly, part of the 50S ribosomal subunit.

Its subcellular location is the plastid. The protein localises to the chloroplast. The chain is Large ribosomal subunit protein uL2cz/uL2cy (rpl2-A) from Nymphaea alba (White water-lily).